The primary structure comprises 408 residues: Glutamate N-acetyltransferase (408 aa).

Residues Thr150, Lys176, Thr189, Glu271, Asn403, and Thr408 each coordinate substrate. The Nucleophile role is filled by Thr189.

The protein belongs to the ArgJ family. Heterotetramer of two alpha and two beta chains.

Its subcellular location is the cytoplasm. The catalysed reaction is N(2)-acetyl-L-ornithine + L-glutamate = N-acetyl-L-glutamate + L-ornithine. Its pathway is amino-acid biosynthesis; L-arginine biosynthesis; L-ornithine and N-acetyl-L-glutamate from L-glutamate and N(2)-acetyl-L-ornithine (cyclic): step 1/1. Catalyzes the transfer of the acetyl group from N(2)-acetylornithine to glutamate, forming N-acetylglutamate and L-ornithine. This Methanococcus vannielii (strain ATCC 35089 / DSM 1224 / JCM 13029 / OCM 148 / SB) protein is Glutamate N-acetyltransferase.